The chain runs to 265 residues: Reduced viability upon starvation protein 161 (265 aa).

In terms of domain architecture, BAR spans 15 to 239; sequence HSVIIKNVDK…LDQQSRDDYA (225 aa). Residues 126-193 adopt a coiled-coil conformation; sequence YFKEIEEAIK…NQLKTELPQL (68 aa).

It is found in the cytoplasm. The protein localises to the cytoskeleton. Component of a cytoskeletal structure that is required for the formation of endocytic vesicles at the plasma membrane level. This is Reduced viability upon starvation protein 161 (RVS161) from Saccharomyces cerevisiae (strain ATCC 204508 / S288c) (Baker's yeast).